A 1031-amino-acid polypeptide reads, in one-letter code: Probable ATP-dependent RNA helicase DDX46 (1031 aa).

The segment covering 1–24 (MGRESRHYRKRSASRGRSGSRSRS) has biased composition (basic residues). Residues 1–228 (MGRESRHYRK…EMEGEELDPL (228 aa)) form a disordered region. Gly2 carries the N-myristoyl glycine lipid modification. Residues 26 to 49 (SPSDKRSKRGDDRRSRSRDRDRRR) show a composition bias toward basic and acidic residues. Composition is skewed to basic residues over residues 50 to 73 (ERSRSRDKRRSRSRDRKRLRRSRS) and 81 to 103 (ERRRSRSRDRRRSRSRSRGRRSR). Residues 112 to 200 (KKTENRSRSK…EMKQGKKWSL (89 aa)) are compositionally biased toward basic and acidic residues. Residues 152–197 (DQNKLEEEMRKRKERVEKWREEQRKKAMENIGELKKEIEEMKQGKK) adopt a coiled-coil conformation. Lys186 is covalently cross-linked (Glycyl lysine isopeptide (Lys-Gly) (interchain with G-Cter in SUMO2)). The residue at position 199 (Ser199) is a Phosphoserine. Acidic residues-rich tracts occupy residues 201 to 211 (EDDDDDEDDPA) and 219 to 228 (EMEGEELDPL). Position 263 is an N6-acetyllysine (Lys263). Tyr294 is subject to Phosphotyrosine. 2 positions are modified to phosphoserine: Ser295 and Ser296. Lys325 participates in a covalent cross-link: Glycyl lysine isopeptide (Lys-Gly) (interchain with G-Cter in SUMO2). Ser346 carries the post-translational modification Phosphoserine. The Q motif signature appears at 372–400 (KSWVQCGISMKILNSLKKHGYEKPTPIQT). One can recognise a Helicase ATP-binding domain in the interval 403-581 (IPAIMSGRDL…RRILSKPIEV (179 aa)). An ATP-binding site is contributed by 416–423 (AKTGSGKT). Residues 529–532 (DEAD) carry the DEAD box motif. The Helicase C-terminal domain occupies 592–753 (DVEQQVIVIE…AVPPDLEKLW (162 aa)). N6-acetyllysine is present on Lys776. A Glycyl lysine isopeptide (Lys-Gly) (interchain with G-Cter in SUMO2) cross-link involves residue Lys779. Ser804 bears the Phosphoserine mark. Residue Lys903 is modified to N6-acetyllysine. Residues Lys907 and Lys915 each participate in a glycyl lysine isopeptide (Lys-Gly) (interchain with G-Cter in SUMO2) cross-link. Ser928 bears the Phosphoserine mark.

It belongs to the DEAD box helicase family. DDX46/PRP5 subfamily. In terms of assembly, component of the 17S U2 SnRNP complex, a ribonucleoprotein complex that contains small nuclear RNA (snRNA) U2 and a number of specific proteins. Within the 17S U2 SnRNP complex, DDX46 is part of the SF3B subcomplex, which is required for 'A' complex assembly formed by the stable binding of U2 snRNP to the branchpoint sequence in pre-mRNA. Recruited to the 17S U2 SnRNP complex following release of DDX42; DDX42 and DDX46 bind the SF3B subcomplex in a competitive manner.

The protein resides in the nucleus speckle. It localises to the nucleus. It is found in the cajal body. It catalyses the reaction ATP + H2O = ADP + phosphate + H(+). Its function is as follows. Component of the 17S U2 SnRNP complex of the spliceosome, a large ribonucleoprotein complex that removes introns from transcribed pre-mRNAs. The 17S U2 SnRNP complex (1) directly participates in early spliceosome assembly and (2) mediates recognition of the intron branch site during pre-mRNA splicing by promoting the selection of the pre-mRNA branch-site adenosine, the nucleophile for the first step of splicing. Within the 17S U2 SnRNP complex, DDX46 plays essential roles during assembly of pre-spliceosome and proofreading of the branch site. The chain is Probable ATP-dependent RNA helicase DDX46 from Homo sapiens (Human).